A 1936-amino-acid chain; its full sequence is Trinucleotide repeat-containing gene 6C protein (1936 aa).

Positions 1-31 (MEEKKKKKQEEKKKKEGAQKKAADQKTKVPE) are enriched in basic and acidic residues. 6 disordered regions span residues 1–160 (MEEK…PTYR), 181–256 (PSIT…NSNG), 366–412 (PQES…AMQT), 439–931 (NGSS…IRRK), 961–1063 (VIQS…VAFG), and 1115–1139 (ESTS…KTSG). Positions 34–44 (KTCSSQPQPAG) are enriched in polar residues. A compositionally biased stretch (low complexity) spans 45 to 57 (TSTSTSTSTISSS). The span at 58–71 (NNGKRASASGQQPA) shows a compositional bias: polar residues. Residues 76–88 (LPREVPPRFRQQE) show a composition bias toward basic and acidic residues. 2 stretches are compositionally biased toward polar residues: residues 100-111 (PTGTLTSVSPTQ) and 183-217 (ITGT…GSAQ). The sufficient for interaction with argonaute family proteins stretch occupies residues 211–1133 (MATGSAQGNF…GNAPKKGLQK (923 aa)). Residues 218–235 (GNFTGHTKKTNGNNGTNG) show a composition bias toward low complexity. Positions 366–393 (PQESTEPQTSTSQNVSFSAQPQNLNTDG) are enriched in polar residues. 3 stretches are compositionally biased toward low complexity: residues 394 to 408 (PNNT…NPIN), 439 to 453 (NGSS…SAEG), and 469 to 480 (GNSNSGFSQGNG). Residues 481–498 (DTVNSALSAKQNGSSSAV) are compositionally biased toward polar residues. Omega-N-methylarginine is present on R523. A compositionally biased stretch (polar residues) spans 572–585 (GWESPSVTSQNPTV). The span at 594–614 (SWAKAASSGTTASEGSSDGSG) shows a compositional bias: low complexity. Basic and acidic residues predominate over residues 625–636 (GTGEGRRRDKGI). The segment covering 654-669 (LSNTGWGQTPVKQNTA) has biased composition (polar residues). Basic and acidic residues predominate over residues 674-684 (ESPRSERKNDN). S675 is subject to Phosphoserine. Residues 694 to 718 (TQASNSGGKNDGSIMNSTNTSSVSG) are compositionally biased toward polar residues. Composition is skewed to low complexity over residues 720 to 730 (VNAPPAAVPAN) and 750 to 772 (SISS…SGAA). Composition is skewed to polar residues over residues 834 to 866 (NRSG…TNWG) and 873 to 888 (PQQN…NVSN). S924 bears the Phosphoserine mark. A compositionally biased stretch (low complexity) spans 964–982 (SSTTTNTTTTTTTTTSNTT). Residue T987 is modified to Phosphothreonine. A compositionally biased stretch (polar residues) spans 1021–1035 (ENSWGEPSSPSTLVD). The UBA domain maps to 1140–1185 (KQDEAWIMSRLIKQLTDMGFPREPAEEALKSNNMNLDQAMSALLEK). Position 1218 is a phosphoserine (S1218). Disordered regions lie at residues 1291 to 1312 (AAQA…NSSQ), 1419 to 1658 (VKQP…PSSS), 1689 to 1732 (STWS…PSST), and 1848 to 1869 (TSSW…GSSH). Residues 1388–1419 (MRQQEQQVARTITNLQQQIQQHQRQLAQALLV) adopt a coiled-coil conformation. Pro residues predominate over residues 1421-1430 (QPPPPPPPPH). The interval 1467–1936 (NTFAPYPLAG…PGDLLSGESL (470 aa)) is silencing domain; interaction with CNOT1 and PAN3. Polar residues predominate over residues 1496-1515 (DPSQSQSRLPQWTHPNSMDN). Residues 1578–1624 (KSDSDKISNGSSINWPPEFHPGVPWKGLQNIDPENDPDVTPGSVPTG) form a required for interaction with PABPC1 region. Positions 1578 to 1936 (KSDSDKISNG…PGDLLSGESL (359 aa)) are sufficient for translational repression when tethered to a target mRNA. Positions 1588–1606 (SSINWPPEFHPGVPWKGLQ) are PABPC1-interacting motif-2 (PAM2). A compositionally biased stretch (polar residues) spans 1623-1633 (TGPTINTTIQD). The segment covering 1641 to 1658 (SGGSSPPSSQNATLPSSS) has biased composition (low complexity). Positions 1689-1703 (STWSSGPTSHTQASL) are enriched in polar residues. An RRM domain is found at 1811-1878 (AQKSLHMCVL…HGLVRSDAGH (68 aa)). The interaction with the CCR4-NOT complex stretch occupies residues 1842–1936 (GQALPPTSSW…PGDLLSGESL (95 aa)). Over residues 1848–1865 (TSSWQSSSASSQPRLSAA) the composition is skewed to low complexity.

Belongs to the GW182 family. As to quaternary structure, interacts with one or more of the argonaute family proteins AGO1, AGO2, AGO3 and AGO4. Interacts with PABPC1 and EIF4G1. Interacts with CNOT1; the interaction is direct and mediates the association with the CCR4-NOT complex. Interacts with PAN3; the interaction mediates the association with the PAN complex.

Its function is as follows. Plays a role in RNA-mediated gene silencing by micro-RNAs (miRNAs). Required for miRNA-dependent translational repression of complementary mRNAs by argonaute family proteins. As scaffoldng protein associates with argonaute proteins bound to partially complementary mRNAs and simultaneously can recruit CCR4-NOT and PAN deadenylase complexes. The chain is Trinucleotide repeat-containing gene 6C protein (TNRC6C) from Homo sapiens (Human).